A 290-amino-acid chain; its full sequence is 6-phospho-5-dehydro-2-deoxy-D-gluconate aldolase (290 aa).

The Proton donor role is filled by D85. Residues H86 and H180 each contribute to the Zn(2+) site. Position 181 (G181) interacts with dihydroxyacetone phosphate. H208 contacts Zn(2+). Dihydroxyacetone phosphate is bound by residues 209 to 211 (GAS) and 230 to 233 (NINT). A Phosphothreonine modification is found at T233.

The protein belongs to the class II fructose-bisphosphate aldolase family. IolJ subfamily. The cofactor is Zn(2+).

The catalysed reaction is 6-phospho-5-dehydro-2-deoxy-D-gluconate = 3-oxopropanoate + dihydroxyacetone phosphate. The protein operates within polyol metabolism; myo-inositol degradation into acetyl-CoA; acetyl-CoA from myo-inositol: step 6/7. Produces dihydroxyacetone phosphate (DHAP or glycerone phosphate) and malonic semialdehyde (MSA or 3-oxopropanoate) from 6-phospho-5-dehydro-2-deoxy-D-gluconate (DKGP). The protein is 6-phospho-5-dehydro-2-deoxy-D-gluconate aldolase (iolJ) of Bacillus velezensis (strain DSM 23117 / BGSC 10A6 / LMG 26770 / FZB42) (Bacillus amyloliquefaciens subsp. plantarum).